The following is a 117-amino-acid chain: Small ribosomal subunit protein uS19c (117 aa).

The protein belongs to the universal ribosomal protein uS19 family.

The protein resides in the plastid. Protein S19 forms a complex with S13 that binds strongly to the 16S ribosomal RNA. This chain is Small ribosomal subunit protein uS19c (rps19), found in Helicosporidium sp. subsp. Simulium jonesii (Green alga).